The chain runs to 417 residues: NADH-quinone oxidoreductase subunit D (417 aa).

The protein belongs to the complex I 49 kDa subunit family. In terms of assembly, NDH-1 is composed of 14 different subunits. Subunits NuoB, C, D, E, F, and G constitute the peripheral sector of the complex.

The protein localises to the cell inner membrane. It carries out the reaction a quinone + NADH + 5 H(+)(in) = a quinol + NAD(+) + 4 H(+)(out). In terms of biological role, NDH-1 shuttles electrons from NADH, via FMN and iron-sulfur (Fe-S) centers, to quinones in the respiratory chain. The immediate electron acceptor for the enzyme in this species is believed to be ubiquinone. Couples the redox reaction to proton translocation (for every two electrons transferred, four hydrogen ions are translocated across the cytoplasmic membrane), and thus conserves the redox energy in a proton gradient. The polypeptide is NADH-quinone oxidoreductase subunit D (Nitrosococcus oceani (strain ATCC 19707 / BCRC 17464 / JCM 30415 / NCIMB 11848 / C-107)).